Consider the following 1346-residue polypeptide: G-protein coupled receptor-associated sorting protein 1 (1346 aa).

Disordered stretches follow at residues 1–101 (MTGA…FRGE), 144–177 (TESI…RPRP), and 192–258 (ADKS…SAKT). Residues 21-36 (ENANAAEVEPEVPLVV) are compositionally biased toward low complexity. Basic residues predominate over residues 211 to 226 (FRPRKSMKSNTRFRHM). Ser-295 carries the phosphoserine modification. 2 disordered regions span residues 311-399 (EEAK…RPEE) and 461-485 (VSSF…SKSM). Positions 316-333 (RSKPRARKGVNMRARHQA) are enriched in basic residues. Basic and acidic residues-rich tracts occupy residues 347–361 (DKNK…EEKA) and 370–399 (KKEP…RPEE). Residues 461–484 (VSSFCLGSGKKTSMESGPKATSKS) show a composition bias toward polar residues. Residues Ser-619 and Ser-626 each carry the phosphoserine modification. Thr-860 bears the Phosphothreonine mark. The residue at position 862 (Ser-862) is a Phosphoserine. Residues 984 to 1004 (ACEPESSTEHEPDPSRRPQSW) are disordered. Residues 990–1003 (STEHEPDPSRRPQS) show a composition bias toward basic and acidic residues.

Belongs to the GPRASP family. In terms of assembly, interacts with cytoplasmic tails of a variety of G-protein coupled receptors such as delta opioid receptor/OPRD1, beta-2 adrenergic receptor/ADRB2 and D4 dopamine receptor/DRD4. Interacts with BECN2; the interaction is direct and with D2 dopamine receptor/DRD2. Interacts with PER1. Expressed in the brain.

It is found in the cytoplasm. In terms of biological role, modulates lysosomal sorting and functional down-regulation of a variety of G-protein coupled receptors. Targets receptors for degradation in lysosomes via its interaction with BECN2. The sequence is that of G-protein coupled receptor-associated sorting protein 1 (Gprasp1) from Rattus norvegicus (Rat).